Here is a 200-residue protein sequence, read N- to C-terminus: dITP/XTP pyrophosphatase (200 aa).

Residue 16–21 (SNNDGK) coordinates substrate. Glutamate 46 and aspartate 75 together coordinate Mg(2+). The active-site Proton acceptor is the aspartate 75. Residues serine 76, 154–157 (FGYD), lysine 177, and 182–183 (HR) contribute to the substrate site.

It belongs to the HAM1 NTPase family. Homodimer. It depends on Mg(2+) as a cofactor.

It catalyses the reaction XTP + H2O = XMP + diphosphate + H(+). It carries out the reaction dITP + H2O = dIMP + diphosphate + H(+). The enzyme catalyses ITP + H2O = IMP + diphosphate + H(+). In terms of biological role, pyrophosphatase that catalyzes the hydrolysis of nucleoside triphosphates to their monophosphate derivatives, with a high preference for the non-canonical purine nucleotides XTP (xanthosine triphosphate), dITP (deoxyinosine triphosphate) and ITP. Seems to function as a house-cleaning enzyme that removes non-canonical purine nucleotides from the nucleotide pool, thus preventing their incorporation into DNA/RNA and avoiding chromosomal lesions. The protein is dITP/XTP pyrophosphatase of Prochlorococcus marinus (strain SARG / CCMP1375 / SS120).